Consider the following 513-residue polypeptide: Leucine-rich repeat-containing protein 24 (513 aa).

The first 20 residues, 1 to 20, serve as a signal peptide directing secretion; the sequence is MALRAPALLPLLLLLLPLRA. Residues 21-50 enclose the LRRNT domain; the sequence is AGCPAACRCYSATVECGALRLRVVPLGIPP. LRR repeat units follow at residues 51–72, 75–96, 99–120, 123–144, 147–168, and 171–192; these read GTQT…ALAP, ALRR…AFRA, RLLE…AFVG, QLRV…TFLH, RLQE…ALAG, and SLAL…ALQP. Residues 204–259 form the LRRCT domain; the sequence is NPWRCDCALHWLGAWIKEGGQRLLTSRDRKIMCAEPPRLALQSLLDVSHSSLICIP. The 102-residue stretch at 260–361 folds into the Ig-like C2-type domain; that stretch reads PSVHVQPLEL…GAARVPFRLL (102 aa). Cys-281 and Cys-345 form a disulfide bridge. Asn-334 and Asn-363 each carry an N-linked (GlcNAc...) asparagine glycan. A disordered region spans residues 365 to 391; it reads SRQQPQQPAQPPPPAARPAGSEPRPEA. The chain crosses the membrane as a helical span at residues 406 to 426; that stretch reads AIAAAIALLALTALLLVAMIC.

The protein localises to the membrane. The chain is Leucine-rich repeat-containing protein 24 (LRRC24) from Homo sapiens (Human).